The following is a 350-amino-acid chain: Sodium/calcium exchanger MaX1 (350 aa).

Transmembrane regions (helical) follow at residues Val-4 to Val-24, Phe-39 to Ile-59, Ile-69 to Ala-89, Met-101 to Phe-121, Leu-125 to Phe-145, Gly-202 to Ala-222, Val-242 to Ala-264, Val-276 to Pro-296, Met-302 to Ile-322, and Arg-330 to Ile-350.

It belongs to the Ca(2+):cation antiporter (CaCA) (TC 2.A.19) family.

The protein localises to the cell membrane. Its activity is regulated as follows. Calcium transport is inhibited by Na(+), K(+), Li(+), Mg(2+) or Mn(2+). In terms of biological role, catalyzes Na(+)/Ca(2+) exchange. The transport is electrogenic with a likely stoichiometry of 3 or more Na(+) for each Ca(2+). Is K(+)-independent. This chain is Sodium/calcium exchanger MaX1 (maX1), found in Methanosarcina acetivorans (strain ATCC 35395 / DSM 2834 / JCM 12185 / C2A).